Consider the following 767-residue polypeptide: Cilium assembly protein DZIP1L (767 aa).

The tract at residues 122-144 is disordered; that stretch reads QQRGQQELGRQADELKGVREESR. The segment covering 131–144 has biased composition (basic and acidic residues); that stretch reads RQADELKGVREESR. Residues 166–189 form a C2H2-type zinc finger; sequence HTCHLCDKTFMNATFLRGHIQRRH. Residues 205–406 are a coiled coil; that stretch reads VEEVLEELRA…SQEEMIQSLS (202 aa). A Phosphoserine modification is found at Ser426. Residues 518–767 form a disordered region; sequence SRAKERQENG…SSGQPRVPAW (250 aa). Polar residues-rich tracts occupy residues 533 to 547 and 574 to 588; these read PDGQPSVKSQQSTLV and RQSHGSHGSSLTQVS. A compositionally biased stretch (low complexity) spans 607-616; it reads GPGMSTPPFS. Residues 658 to 675 are compositionally biased toward polar residues; the sequence is ENAQPPGQGSGTLVQSMV. A compositionally biased stretch (basic and acidic residues) spans 677 to 686; it reads NLEKQLEAPA.

It belongs to the DZIP C2H2-type zinc-finger protein family. As to quaternary structure, interacts with SEPTIN2.

Its subcellular location is the cytoplasm. It localises to the cytoskeleton. It is found in the cilium basal body. The protein resides in the microtubule organizing center. The protein localises to the centrosome. Its subcellular location is the centriole. In terms of biological role, involved in primary cilium formation. Probably acts as a transition zone protein required for localization of PKD1/PC1 and PKD2/PC2 to the ciliary membrane. The sequence is that of Cilium assembly protein DZIP1L from Homo sapiens (Human).